The sequence spans 476 residues: Arginine biosynthesis bifunctional protein ArgJ, mitochondrial (476 aa).

Residues T204, K233, T244, E331, N471, and T476 each contribute to the substrate site. The Nucleophile role is filled by T244.

The protein belongs to the ArgJ family. Heterodimer of an alpha and a beta chain. Post-translationally, the alpha and beta chains are autoproteolytically processed from a single precursor protein within the mitochondrion.

The protein resides in the mitochondrion matrix. It catalyses the reaction N(2)-acetyl-L-ornithine + L-glutamate = N-acetyl-L-glutamate + L-ornithine. It carries out the reaction L-glutamate + acetyl-CoA = N-acetyl-L-glutamate + CoA + H(+). The protein operates within amino-acid biosynthesis; L-arginine biosynthesis; L-ornithine and N-acetyl-L-glutamate from L-glutamate and N(2)-acetyl-L-ornithine (cyclic): step 1/1. It functions in the pathway amino-acid biosynthesis; L-arginine biosynthesis; N(2)-acetyl-L-ornithine from L-glutamate: step 1/4. Its function is as follows. Catalyzes two activities which are involved in the cyclic version of arginine biosynthesis: the synthesis of acetylglutamate from glutamate and acetyl-CoA, and of ornithine by transacetylation between acetylornithine and glutamate. This is Arginine biosynthesis bifunctional protein ArgJ, mitochondrial from Arthroderma otae (strain ATCC MYA-4605 / CBS 113480) (Microsporum canis).